Reading from the N-terminus, the 492-residue chain is Catalase-4 (492 aa).

Catalysis depends on residues histidine 65 and asparagine 138. Tyrosine 348 provides a ligand contact to heme.

This sequence belongs to the catalase family. Homotetramer. Requires heme as cofactor.

The protein localises to the peroxisome. It localises to the glyoxysome. The enzyme catalyses 2 H2O2 = O2 + 2 H2O. Occurs in almost all aerobically respiring organisms and serves to protect cells from the toxic effects of hydrogen peroxide. In Glycine max (Soybean), this protein is Catalase-4 (CAT4).